The following is a 296-amino-acid chain: Acetylglutamate kinase (296 aa).

Residues 67-68 (GG), arginine 89, and asparagine 194 each bind substrate.

The protein belongs to the acetylglutamate kinase family. ArgB subfamily.

The protein resides in the cytoplasm. The catalysed reaction is N-acetyl-L-glutamate + ATP = N-acetyl-L-glutamyl 5-phosphate + ADP. Its pathway is amino-acid biosynthesis; L-arginine biosynthesis; N(2)-acetyl-L-ornithine from L-glutamate: step 2/4. Catalyzes the ATP-dependent phosphorylation of N-acetyl-L-glutamate. This Syntrophus aciditrophicus (strain SB) protein is Acetylglutamate kinase.